Here is a 431-residue protein sequence, read N- to C-terminus: Enolase (431 aa).

Residue glutamine 167 participates in (2R)-2-phosphoglycerate binding. Residue glutamate 209 is the Proton donor of the active site. Residues aspartate 246, glutamate 289, and aspartate 316 each contribute to the Mg(2+) site. (2R)-2-phosphoglycerate-binding residues include lysine 341, arginine 370, serine 371, and lysine 392. The active-site Proton acceptor is the lysine 341.

Belongs to the enolase family. Component of the RNA degradosome, a multiprotein complex involved in RNA processing and mRNA degradation. Mg(2+) serves as cofactor.

The protein localises to the cytoplasm. The protein resides in the secreted. It localises to the cell surface. It carries out the reaction (2R)-2-phosphoglycerate = phosphoenolpyruvate + H2O. Its pathway is carbohydrate degradation; glycolysis; pyruvate from D-glyceraldehyde 3-phosphate: step 4/5. Its function is as follows. Catalyzes the reversible conversion of 2-phosphoglycerate (2-PG) into phosphoenolpyruvate (PEP). It is essential for the degradation of carbohydrates via glycolysis. The sequence is that of Enolase from Shewanella denitrificans (strain OS217 / ATCC BAA-1090 / DSM 15013).